The primary structure comprises 311 residues: MGGGGEDEYESLPTHSIPVHLAAGALAGAVEHCVMFPFDSVKTRMQSLCPCETKCPTPVHSLMSIVKREGWLRPLRGVNAVAAGSMPAHALYFTVYEKMKSFLTGNTAGHEHTLAYGASGVVATLIHDAVMNPAEVVKQRMQMAYSPYGSSLECARCVYNREGFAAFYRSYTTQLAMNVPFQAIHFMGYEFWQQVLNPEHKYDPKSHLIAGGLAGGLAAAVTTPMDCVKTVLNTQQAAEADPSNRRIFLKARYRYRGISDAVRTIYSQRGMAGFSCGLQARVIFQVPATALSWSVYELFKFMLSFEGGHSS.

Solcar repeat units follow at residues 15 to 102, 111 to 195, and 202 to 302; these read HSIP…MKSF, EHTL…WQQV, and YDPK…FKFM. Helical transmembrane passes span 17 to 36, 77 to 96, 112 to 132, 170 to 189, 204 to 223, and 277 to 296; these read IPVH…CVMF, GVNA…FTVY, HTLA…AVMN, SYTT…FMGY, PKSH…AVTT, and GLQA…WSVY.

The protein belongs to the mitochondrial carrier (TC 2.A.29) family.

It is found in the mitochondrion inner membrane. Its function is as follows. Mitochondrial iron transporter that mediates iron uptake. Probably required for heme synthesis of hemoproteins and Fe-S cluster assembly. In Caenorhabditis briggsae, this protein is Mitoferrin.